We begin with the raw amino-acid sequence, 483 residues long: UDP-glycosyltransferase 85C1 (483 aa).

Residues serine 304, 360-361 (WC), 378-386 (HCGWGSIIE), and 400-403 (IGDQ) contribute to the UDP-alpha-D-glucose site.

It belongs to the UDP-glycosyltransferase family.

Functionally, may glycosylate diterpenes or flavonols in leaves. This chain is UDP-glycosyltransferase 85C1, found in Stevia rebaudiana (Stevia).